Consider the following 327-residue polypeptide: DNA-directed RNA polymerase subunit alpha (327 aa).

The segment at 1 to 227 is alpha N-terminal domain (alpha-NTD); that stretch reads MLIAHRPTLI…ELFGLARELN (227 aa). Residues 244–327 are alpha C-terminal domain (alpha-CTD); the sequence is SDEDLRIPIE…GSYFDPNYGS (84 aa).

The protein belongs to the RNA polymerase alpha chain family. As to quaternary structure, homodimer. The RNAP catalytic core consists of 2 alpha, 1 beta, 1 beta' and 1 omega subunit. When a sigma factor is associated with the core the holoenzyme is formed, which can initiate transcription.

The catalysed reaction is RNA(n) + a ribonucleoside 5'-triphosphate = RNA(n+1) + diphosphate. Its function is as follows. DNA-dependent RNA polymerase catalyzes the transcription of DNA into RNA using the four ribonucleoside triphosphates as substrates. The protein is DNA-directed RNA polymerase subunit alpha of Tropheryma whipplei (strain TW08/27) (Whipple's bacillus).